The primary structure comprises 181 residues: UPF0302 protein lmo1921 (181 aa).

It belongs to the UPF0302 family.

This is UPF0302 protein lmo1921 from Listeria monocytogenes serovar 1/2a (strain ATCC BAA-679 / EGD-e).